A 241-amino-acid polypeptide reads, in one-letter code: MSVCMPQKRYYRQRAHSNPMADHTFQYPVCPEQMDWSPLYPQYFPQQEEAGGAQVEFADIGCGYGGLLVQLSQLFPQQLILGLEIRVKVSDYVQDRIRSLRVAEPGRYQNIACLRSNAMKYLPNFFRKGQLSKMFFLFPDPHFKKTKHKWRIISPTLLAEYAYTLRIGGLVYTNTDVEEVHEWIVQHFSDHPLFSRVTEEQLADDIIVGHLGTCTEEGKKVQRNGGKNFLAVFRRVEDPQT.

Gly61, Glu84, Arg86, Asn117, Ala118, and Leu137 together coordinate S-adenosyl-L-methionine. Residue Asp140 is part of the active site. Residues Pro141–Lys149 are alphaC helix. 2 residues coordinate S-adenosyl-L-methionine: Thr215 and Glu217. Residues Thr215–Arg223 are alpha6 helix.

This sequence belongs to the class I-like SAM-binding methyltransferase superfamily. TrmB family. Catalytic component of the METTL1-WDR4 complex, composed of mettl1 and wdr4.

The protein localises to the nucleus. The catalysed reaction is guanosine(46) in tRNA + S-adenosyl-L-methionine = N(7)-methylguanosine(46) in tRNA + S-adenosyl-L-homocysteine. The enzyme catalyses a guanosine in mRNA + S-adenosyl-L-methionine = an N(7)-methylguanosine in mRNA + S-adenosyl-L-homocysteine. It catalyses the reaction a guanosine in miRNA + S-adenosyl-L-methionine = an N(7)-methylguanosine in miRNA + S-adenosyl-L-homocysteine. It functions in the pathway tRNA modification; N(7)-methylguanine-tRNA biosynthesis. In terms of biological role, catalytic component of METTL1-WDR4 methyltransferase complex that mediates the formation of N(7)-methylguanine in a subset of RNA species, such as tRNAs, mRNAs and microRNAs (miRNAs). Catalyzes the formation of N(7)-methylguanine at position 46 (m7G46) in a large subset of tRNAs that contain the 5'-RAGGU-3' motif within the variable loop. M7G46 interacts with C13-G22 in the D-loop to stabilize tRNA tertiary structure and protect tRNAs from decay. Also acts as a methyltransferase for a subset of internal N(7)-methylguanine in mRNAs. Internal N(7)-methylguanine methylation of mRNAs in response to stress promotes their relocalization to stress granules, thereby suppressing their translation. Also methylates a specific subset of miRNAs. This Danio rerio (Zebrafish) protein is tRNA (guanine-N(7)-)-methyltransferase (mettl1).